The chain runs to 869 residues: TATA box-binding protein-associated factor RNA polymerase I subunit C (869 aa).

2 disordered regions span residues 605–629 (SSLR…ASWT) and 729–869 (GAAW…RMGF). Thr834 carries the post-translational modification Phosphothreonine. A compositionally biased stretch (polar residues) spans 835–860 (PPHSQASSVRATRSQQHTPVLSSSQP). At Ser848 the chain carries Phosphoserine.

As to quaternary structure, component of the transcription factor SL1/TIF-IB complex, composed of TBP and at least TAF1A, TAF1B, TAF1C and TAF1D. In the complex interacts directly with TBP, TAF1A and TAF1B. Interaction of the SL1/TIF-IB subunits with TBP excludes interaction of TBP with the transcription factor IID (TFIID) subunits. Interacts with MYC and RRN3. Interacts with p53/TP53; the interaction prevents the association of SL1/TIF-IB with UBTF and represses RNA polymerase I transcription. Part of Pol I pre-initiation complex (PIC), in which Pol I core assembles with RRN3 and promoter-bound UTBF and SL1/TIF-IB complex.

Its subcellular location is the nucleus. It is found in the nucleolus. Component of the transcription factor SL1/TIF-IB complex, which is involved in the assembly of the PIC (pre-initiation complex) during RNA polymerase I-dependent transcription. The rate of PIC formation probably is primarily dependent on the rate of association of SL1/TIF-IB with the rDNA promoter. SL1/TIF-IB is involved in stabilization of nucleolar transcription factor 1/UBTF on rDNA. Formation of SL1/TIF-IB excludes the association of TBP with TFIID subunits. Recruits RNA polymerase I to the rRNA gene promoter via interaction with RRN3. This Homo sapiens (Human) protein is TATA box-binding protein-associated factor RNA polymerase I subunit C (TAF1C).